Reading from the N-terminus, the 582-residue chain is mRNA-decapping enzyme 1A (582 aa).

Serine 62 carries the post-translational modification Phosphoserine. A compositionally biased stretch (basic and acidic residues) spans 132–141 (RSQQAARDKQ). 2 disordered regions span residues 132 to 154 (RSQQ…DHRP) and 172 to 214 (QMGD…PSGH). A phosphoserine mark is found at serine 142, serine 179, serine 180, serine 315, serine 319, and serine 334. Polar residues predominate over residues 173–196 (MGDSNISSPGLQPSTQLSNLGSTE). Threonine 348 is modified (phosphothreonine). Serine 353 bears the Phosphoserine mark. Arginine 376 carries the post-translational modification Asymmetric dimethylarginine. Threonine 401 is modified (phosphothreonine). 4 positions are modified to phosphoserine: serine 422, serine 522, serine 523, and serine 525. A disordered region spans residues 513–536 (RSSDLERKASSPSPLTIGTPESQR). Residues 522 to 533 (SSPSPLTIGTPE) are compositionally biased toward polar residues. Phosphothreonine occurs at positions 528 and 531.

The protein belongs to the DCP1 family. (Microbial infection) Interacts with rotavirus A non-structural protein 2; this interaction probably plays a role in the sequestration of DCP1A in viral factories. Interacts with rotavirus A non-structural protein 5; this interaction probably plays a role in its sequestration in viral factories. In terms of assembly, forms a complex with EDC3, DCP2, DDX6 and EDC4/HEDLS, within this complex directly interacts with EDC3. Part of a cytoplasmic complex containing proteins involved in mRNA decay, including XRN1 and LSM1. Interacts with DCP1B. Interacts with DCP2. Interacts with DDX17 in an RNA-independent manner. Interacts with PNRC2. Interacts with SMAD4. Interacts with UPF1. Interacts with ZC3HAV1. Interacts with ZFP36L1. Interacts with NBDY. Interacts with DHX34; the interaction is RNA-independent. In terms of tissue distribution, detected in heart, brain, placenta, lung, skeletal muscle, liver, kidney and pancreas.

It is found in the cytoplasm. It localises to the P-body. Its subcellular location is the nucleus. The enzyme catalyses a 5'-end (N(7)-methyl 5'-triphosphoguanosine)-ribonucleoside in mRNA + H2O = N(7)-methyl-GDP + a 5'-end phospho-ribonucleoside in mRNA + 2 H(+). Its function is as follows. Necessary for the degradation of mRNAs, both in normal mRNA turnover and in nonsense-mediated mRNA decay. Removes the 7-methyl guanine cap structure from mRNA molecules, yielding a 5'-phosphorylated mRNA fragment and 7m-GDP. Contributes to the transactivation of target genes after stimulation by TGFB1. Essential for embryonic development. The polypeptide is mRNA-decapping enzyme 1A (DCP1A) (Homo sapiens (Human)).